Consider the following 333-residue polypeptide: Glyceraldehyde-3-phosphate dehydrogenase (333 aa).

NAD(+) is bound by residues 11–12 (RI), Asp32, and Arg77. D-glyceraldehyde 3-phosphate is bound by residues 148–150 (SCT), Thr179, 208–209 (TG), and Arg231. Cys149 functions as the Nucleophile in the catalytic mechanism. Asn313 lines the NAD(+) pocket.

It belongs to the glyceraldehyde-3-phosphate dehydrogenase family. In terms of assembly, homotetramer.

The protein localises to the cytoplasm. It carries out the reaction D-glyceraldehyde 3-phosphate + phosphate + NAD(+) = (2R)-3-phospho-glyceroyl phosphate + NADH + H(+). It participates in carbohydrate degradation; glycolysis; pyruvate from D-glyceraldehyde 3-phosphate: step 1/5. The sequence is that of Glyceraldehyde-3-phosphate dehydrogenase (Gapdh) from Glossina morsitans morsitans (Savannah tsetse fly).